The following is a 156-amino-acid chain: Cytochrome c-type biogenesis protein CcmE 1 (156 aa).

Residues 1–8 lie on the Cytoplasmic side of the membrane; it reads MNATRRQR. Residues 9–29 form a helical; Signal-anchor for type II membrane protein membrane-spanning segment; sequence LWWVICVLTAAALAVTLIVFA. Topologically, residues 30–156 are periplasmic; sequence LQRNMSYLFT…ATATPLTAPR (127 aa). 2 residues coordinate heme: His-123 and Tyr-127. Residues 137–156 are disordered; that stretch reads AEGHAGKPIPATATPLTAPR. Low complexity predominate over residues 146–156; sequence PATATPLTAPR.

It belongs to the CcmE/CycJ family.

It localises to the cell inner membrane. Functionally, heme chaperone required for the biogenesis of c-type cytochromes. Transiently binds heme delivered by CcmC and transfers the heme to apo-cytochromes in a process facilitated by CcmF and CcmH. This chain is Cytochrome c-type biogenesis protein CcmE 1, found in Xanthomonas euvesicatoria pv. vesicatoria (strain 85-10) (Xanthomonas campestris pv. vesicatoria).